Reading from the N-terminus, the 299-residue chain is MKLLMLCREPNLYSCRRLKMTAENAGHKMDILDPNRFLLKIQENRPHFALYYQPNQGTPYLLPDYDAVIPRFGTQSTKMGCSVLTHLAAKNIPCLNNPASFALARDKWLSLQALAAANIAVPVTVFAGQDFQAGSAVEKVSSPTILKTLNGSQGIGVILADRSQSAVSIMETLTLSHIPVLLQDFIGEAGASDIRCFVIGDKVVAAMQRSGQKGEFRANCHRGGITQQITLSDDEKLIAVRAAQALGLDVAGVDLIQSKKGLLVLEVNASPGLEMIEKTSGIDVATQMIAYLEKKIAGL.

The 183-residue stretch at 111 to 293 folds into the ATP-grasp domain; that stretch reads LQALAAANIA…VATQMIAYLE (183 aa). ATP is bound by residues lysine 147, 184–185, aspartate 193, and 217–219; these read DF and RAN. Mg(2+) is bound by residues aspartate 254, glutamate 266, and asparagine 268. Residues aspartate 254, glutamate 266, and asparagine 268 each coordinate Mn(2+).

Belongs to the RimK family. It depends on Mg(2+) as a cofactor. Mn(2+) is required as a cofactor.

The protein is Probable alpha-L-glutamate ligase of Mannheimia succiniciproducens (strain KCTC 0769BP / MBEL55E).